The chain runs to 338 residues: Anthranilate phosphoribosyltransferase (338 aa).

5-phospho-alpha-D-ribose 1-diphosphate contacts are provided by residues Gly78, 81–82 (GD), Ser86, 88–91 (NIST), 106–114 (KHGNRSITS), and Ser118. Position 78 (Gly78) interacts with anthranilate. Ser90 serves as a coordination point for Mg(2+). Position 109 (Asn109) interacts with anthranilate. Arg163 is an anthranilate binding site. The Mg(2+) site is built by Asp222 and Glu223.

It belongs to the anthranilate phosphoribosyltransferase family. Homodimer. Mg(2+) is required as a cofactor.

The catalysed reaction is N-(5-phospho-beta-D-ribosyl)anthranilate + diphosphate = 5-phospho-alpha-D-ribose 1-diphosphate + anthranilate. The protein operates within amino-acid biosynthesis; L-tryptophan biosynthesis; L-tryptophan from chorismate: step 2/5. Its function is as follows. Catalyzes the transfer of the phosphoribosyl group of 5-phosphorylribose-1-pyrophosphate (PRPP) to anthranilate to yield N-(5'-phosphoribosyl)-anthranilate (PRA). The sequence is that of Anthranilate phosphoribosyltransferase from Staphylococcus haemolyticus (strain JCSC1435).